Consider the following 183-residue polypeptide: Ankyrin repeat domain-containing protein 39 (183 aa).

ANK repeat units follow at residues D30–Q59, A63–A92, G96–V125, and D129–A158. Phosphoserine is present on S153.

This sequence belongs to the ANKRD39 family.

In Homo sapiens (Human), this protein is Ankyrin repeat domain-containing protein 39 (ANKRD39).